A 224-amino-acid chain; its full sequence is Virulence transcriptional regulatory protein PhoP (224 aa).

The Response regulatory domain occupies 3–117; sequence RVLVVEDNAL…EVMARMQALM (115 aa). Asp-52 carries the post-translational modification 4-aspartylphosphate. The segment at residues 125 to 223 is a DNA-binding region (ompR/PhoB-type); sequence SQVINIPPFQ…VRGQGYLFEL (99 aa).

In terms of processing, phosphorylated by PhoQ.

The protein resides in the cytoplasm. Functionally, member of the two-component regulatory system PhoQ/PhoP which regulates the expression of genes involved in virulence and resistance to host defense antimicrobial peptides. The protein is Virulence transcriptional regulatory protein PhoP (phoP) of Salmonella choleraesuis (strain SC-B67).